The following is a 183-amino-acid chain: Lipocalin (183 aa).

An N-terminal signal peptide occupies residues 1–20 (MKGLVLSFALVALSALCVYG). A disulfide bridge connects residues Cys83 and Cys179.

The protein belongs to the calycin superfamily. Lipocalin family. As to quaternary structure, monomer. In terms of tissue distribution, expressed mainly in choroid plexus. Much lower expression in other brain areas, and absent from liver.

It is found in the secreted. Its function is as follows. Might have a transport function across the blood brain barrier. Is supposed to have similar functions as a transthyretin which must have evolved after the stage of the amphibians in evolution. In Rhinella marina (Cane toad), this protein is Lipocalin.